The following is a 326-amino-acid chain: Probable cell division protein WhiA (326 aa).

The H-T-H motif DNA-binding region spans 275–308 (SLEELGALADPPLTKDAIAGRIRRLLALADKRAR).

The protein belongs to the WhiA family.

Its function is as follows. Involved in cell division and chromosome segregation. This Salinispora tropica (strain ATCC BAA-916 / DSM 44818 / JCM 13857 / NBRC 105044 / CNB-440) protein is Probable cell division protein WhiA.